Here is a 132-residue protein sequence, read N- to C-terminus: Phosphoribosyl-AMP cyclohydrolase (132 aa).

D85 provides a ligand contact to Mg(2+). Position 86 (C86) interacts with Zn(2+). 2 residues coordinate Mg(2+): D87 and D89. Residues C102 and C109 each contribute to the Zn(2+) site.

This sequence belongs to the PRA-CH family. As to quaternary structure, homodimer. The cofactor is Mg(2+). Requires Zn(2+) as cofactor.

The protein localises to the cytoplasm. It catalyses the reaction 1-(5-phospho-beta-D-ribosyl)-5'-AMP + H2O = 1-(5-phospho-beta-D-ribosyl)-5-[(5-phospho-beta-D-ribosylamino)methylideneamino]imidazole-4-carboxamide. Its pathway is amino-acid biosynthesis; L-histidine biosynthesis; L-histidine from 5-phospho-alpha-D-ribose 1-diphosphate: step 3/9. Its function is as follows. Catalyzes the hydrolysis of the adenine ring of phosphoribosyl-AMP. The sequence is that of Phosphoribosyl-AMP cyclohydrolase from Frankia alni (strain DSM 45986 / CECT 9034 / ACN14a).